Consider the following 129-residue polypeptide: Small ribosomal subunit protein bS6 (129 aa).

A disordered region spans residues 100 to 129 (SIMLKQKEERAPRREERSEAKPEAKSEAAE). Residues 104 to 129 (KQKEERAPRREERSEAKPEAKSEAAE) are compositionally biased toward basic and acidic residues.

This sequence belongs to the bacterial ribosomal protein bS6 family.

Functionally, binds together with bS18 to 16S ribosomal RNA. The chain is Small ribosomal subunit protein bS6 from Vibrio parahaemolyticus serotype O3:K6 (strain RIMD 2210633).